We begin with the raw amino-acid sequence, 442 residues long: 5-methylthioadenosine/S-adenosylhomocysteine deaminase (442 aa).

Residues His-72 and His-74 each contribute to the Zn(2+) site. Substrate is bound by residues Glu-101 and His-194. Residue His-221 coordinates Zn(2+). The substrate site is built by Glu-224 and Asp-309. Asp-309 contributes to the Zn(2+) binding site.

It belongs to the metallo-dependent hydrolases superfamily. MTA/SAH deaminase family. The cofactor is Zn(2+).

The catalysed reaction is S-adenosyl-L-homocysteine + H2O + H(+) = S-inosyl-L-homocysteine + NH4(+). It catalyses the reaction S-methyl-5'-thioadenosine + H2O + H(+) = S-methyl-5'-thioinosine + NH4(+). Its function is as follows. Catalyzes the deamination of 5-methylthioadenosine and S-adenosyl-L-homocysteine into 5-methylthioinosine and S-inosyl-L-homocysteine, respectively. Is also able to deaminate adenosine. This is 5-methylthioadenosine/S-adenosylhomocysteine deaminase from Teredinibacter turnerae (strain ATCC 39867 / T7901).